The sequence spans 273 residues: Dermonecrotic toxin LamSicTox-alphaIC1 (273 aa).

The active site involves His-5. Residues Glu-25 and Asp-27 each coordinate Mg(2+). The Nucleophile role is filled by His-41. 2 disulfides stabilise this stretch: Cys-45–Cys-51 and Cys-47–Cys-190. Position 85 (Asp-85) interacts with Mg(2+).

It belongs to the arthropod phospholipase D family. Class II subfamily. Mg(2+) is required as a cofactor. Expressed by the venom gland.

The protein resides in the secreted. The catalysed reaction is an N-(acyl)-sphingosylphosphocholine = an N-(acyl)-sphingosyl-1,3-cyclic phosphate + choline. It carries out the reaction an N-(acyl)-sphingosylphosphoethanolamine = an N-(acyl)-sphingosyl-1,3-cyclic phosphate + ethanolamine. The enzyme catalyses a 1-acyl-sn-glycero-3-phosphocholine = a 1-acyl-sn-glycero-2,3-cyclic phosphate + choline. It catalyses the reaction a 1-acyl-sn-glycero-3-phosphoethanolamine = a 1-acyl-sn-glycero-2,3-cyclic phosphate + ethanolamine. Its function is as follows. Dermonecrotic toxins cleave the phosphodiester linkage between the phosphate and headgroup of certain phospholipids (sphingolipid and lysolipid substrates), forming an alcohol (often choline) and a cyclic phosphate. This toxin acts on sphingomyelin (SM). It may also act on ceramide phosphoethanolamine (CPE), lysophosphatidylcholine (LPC) and lysophosphatidylethanolamine (LPE), but not on lysophosphatidylserine (LPS), and lysophosphatidylglycerol (LPG). It acts by transphosphatidylation, releasing exclusively cyclic phosphate products as second products. Induces dermonecrosis, hemolysis, increased vascular permeability, edema, inflammatory response, and platelet aggregation. This Loxosceles amazonica (Recluse spider) protein is Dermonecrotic toxin LamSicTox-alphaIC1.